The sequence spans 2572 residues: Zinc finger homeobox protein 2 (2572 aa).

Disordered stretches follow at residues 1–107 and 343–425; these read MATL…GLPP and LSPP…ADDY. A compositionally biased stretch (low complexity) spans 8–36; it reads STTGTTPSPGHNAPSLPSDTFSSSTPSDP. Composition is skewed to polar residues over residues 44–53 and 389–398; these read ASSTSENMRS and LNQSSPTSKE. C2H2-type zinc fingers lie at residues 453-476 and 508-532; these read LKCP…REKH and YRCD…SDKH. 3 disordered regions span residues 537-566, 608-655, and 675-710; these read QGFQ…PKTK, LPPG…LRPD, and RKFP…SPPP. A compositionally biased stretch (pro residues) spans 615-628; sequence PGPPPPPGATPTSP. The span at 696–705 shows a compositional bias: low complexity; that stretch reads LLGSSSDSLP. 2 C2H2-type zinc fingers span residues 821–845 and 870–894; these read LRCN…GAAH and YHCL…TPAH. The interval 929 to 974 is disordered; it reads QLRTPGKAPVTPLAEPPTPEKDAQNKTEQLASEETENKTGPSRDSA. Residues 954 to 974 show a composition bias toward polar residues; sequence KTEQLASEETENKTGPSRDSA. The C2H2-type 5 zinc finger occupies 1009 to 1032; the sequence is YRCPLCQEQLVGRPALHFHLSHLH. Positions 1061 to 1171 are disordered; sequence PTLSPLDNGQ…PAPADSRHPL (111 aa). A compositionally biased stretch (pro residues) spans 1120-1132; it reads GQPPSPAPSPVPE. 2 consecutive C2H2-type zinc fingers follow at residues 1191 to 1217 and 1248 to 1272; these read YKCT…SHLH and FKCT…SVLH. Disordered stretches follow at residues 1269-1325, 1389-1408, and 1415-1434; these read SVLH…FLSP, LPAA…LAER, and MAKE…LPNE. Residues 1279–1311 are compositionally biased toward basic and acidic residues; it reads TKTDSKIEGPERSQEEPKEGETEGEVGTEKKGP. The segment covering 1392-1401 has biased composition (pro residues); it reads ATPPPPPQPP. The C2H2-type 8 zinc-finger motif lies at 1480-1503; that stretch reads LACGACGKLFSNMLILKTHEEHVH. A disordered region spans residues 1528 to 1591; that stretch reads PPLAEPPKPP…SSRGNLPPLV (64 aa). A DNA-binding region (homeobox 1) is located at residues 1595 to 1654; it reads RRFSRTKFTEFQTQALQSFFETSAYPKDGEVERLASLLGLASRVVVVWFQNARQKARKNA. The segment at 1670 to 1696 adopts a C2H2-type 9; degenerate zinc-finger fold; it reads SGCRRCHATFSCVFELVRHLKKCYDDQ. The segment covering 1696–1724 has biased composition (acidic residues); that stretch reads QTLEEEEEEAERGEEEEEVEEEEVEEEQG. 5 disordered regions span residues 1696–1769, 1820–1860, 1912–2065, 2268–2327, and 2398–2431; these read QTLE…SPAH, AATS…DKRL, ERKG…GMGQ, VQTA…NDAL, and NALL…EAGE. The segment covering 1728-1738 has biased composition (pro residues); sequence PAGPEGPLPEP. A C2H2-type 10 zinc finger spans residues 1769 to 1791; sequence HTCDQCAISFSSQDLLTSHRRLH. Residues 1857–1916 constitute a DNA-binding region (homeobox 2); that stretch reads DKRLRTTILPEQLEILYRWYMQDSNPTRKMLDCISEEVGLKKRVVQVWFQNTRARERKGQ. Over residues 1925 to 1939 the composition is skewed to low complexity; the sequence is PSPAVKPPATATPAS. The segment covering 1949 to 1963 has biased composition (basic and acidic residues); the sequence is KVDDGTGREAPKREA. The span at 1991–2004 shows a compositional bias: pro residues; the sequence is TPEPPLPLLPPPPP. Residues 2017-2044 show a composition bias toward low complexity; sequence SPESEACSLSAGDLSDSSASSLAEPESP. Positions 2045–2061 are enriched in gly residues; that stretch reads GAGGTSGGPGGGTGVPD. A DNA-binding region (homeobox 3) is located at residues 2065-2124; sequence QRRYRTQMSSLQLKIMKACYEAYRTPTMQECEVLGEEIGLPKRVIQVWFQNARAKEKKAK. Residues 2284 to 2293 are compositionally biased toward polar residues; it reads DQTNTSTAGT. A compositionally biased stretch (basic and acidic residues) spans 2305–2315; sequence LGDKVSSERKP. Pro residues predominate over residues 2402–2422; it reads QPPPQPPEPTATAPPKPPELP. The C2H2-type 11; degenerate zinc finger occupies 2451–2471; that stretch reads YLCRQCKMAFDGEAPATAHQR. The segment at 2495–2519 adopts a C2H2-type 12 zinc-finger fold; sequence YHCLACEVLLSGREALASHLRSSAH. Residues 2551-2572 are disordered; it reads EARLPHTDSNPKTTTTSTLLAL. Low complexity predominate over residues 2563-2572; it reads TTTTSTLLAL.

The protein localises to the nucleus. In terms of biological role, transcriptional regulator that is critical for the regulation of pain perception and processing of noxious stimuli. In Homo sapiens (Human), this protein is Zinc finger homeobox protein 2 (ZFHX2).